Reading from the N-terminus, the 101-residue chain is Small ribosomal subunit protein uS14 (101 aa).

This sequence belongs to the universal ribosomal protein uS14 family. In terms of assembly, part of the 30S ribosomal subunit. Contacts proteins S3 and S10.

Binds 16S rRNA, required for the assembly of 30S particles and may also be responsible for determining the conformation of the 16S rRNA at the A site. The protein is Small ribosomal subunit protein uS14 of Arthrobacter sp. (strain FB24).